Reading from the N-terminus, the 277-residue chain is Diaminopimelate epimerase (277 aa).

Positions 13, 46, and 66 each coordinate substrate. Cys75 acts as the Proton donor in catalysis. Residues 76 to 77 (GN), Asn160, Asn193, and 211 to 212 (ER) contribute to the substrate site. Cys220 (proton acceptor) is an active-site residue. 221–222 (GS) is a binding site for substrate.

Belongs to the diaminopimelate epimerase family. In terms of assembly, homodimer.

The protein localises to the cytoplasm. It carries out the reaction (2S,6S)-2,6-diaminopimelate = meso-2,6-diaminopimelate. The protein operates within amino-acid biosynthesis; L-lysine biosynthesis via DAP pathway; DL-2,6-diaminopimelate from LL-2,6-diaminopimelate: step 1/1. Functionally, catalyzes the stereoinversion of LL-2,6-diaminopimelate (L,L-DAP) to meso-diaminopimelate (meso-DAP), a precursor of L-lysine and an essential component of the bacterial peptidoglycan. This chain is Diaminopimelate epimerase, found in Legionella pneumophila subsp. pneumophila (strain Philadelphia 1 / ATCC 33152 / DSM 7513).